The sequence spans 210 residues: Large ribosomal subunit protein uL22 (210 aa).

Positions Asn-123–Lys-210 are disordered. Residues Thr-126 to Thr-157 are compositionally biased toward basic and acidic residues. Residues Lys-158 to Pro-185 are compositionally biased toward low complexity.

The protein belongs to the universal ribosomal protein uL22 family. In terms of assembly, part of the 50S ribosomal subunit.

This protein binds specifically to 23S rRNA; its binding is stimulated by other ribosomal proteins, e.g. L4, L17, and L20. It is important during the early stages of 50S assembly. It makes multiple contacts with different domains of the 23S rRNA in the assembled 50S subunit and ribosome. Its function is as follows. The globular domain of the protein is located near the polypeptide exit tunnel on the outside of the subunit, while an extended beta-hairpin is found that lines the wall of the exit tunnel in the center of the 70S ribosome. The chain is Large ribosomal subunit protein uL22 from Metamycoplasma arthritidis (strain 158L3-1) (Mycoplasma arthritidis).